A 288-amino-acid chain; its full sequence is Putative branched-chain-amino-acid aminotransferase (288 aa).

N6-(pyridoxal phosphate)lysine is present on Lys-146.

This sequence belongs to the class-IV pyridoxal-phosphate-dependent aminotransferase family. Pyridoxal 5'-phosphate serves as cofactor.

It catalyses the reaction L-leucine + 2-oxoglutarate = 4-methyl-2-oxopentanoate + L-glutamate. It carries out the reaction L-isoleucine + 2-oxoglutarate = (S)-3-methyl-2-oxopentanoate + L-glutamate. The enzyme catalyses L-valine + 2-oxoglutarate = 3-methyl-2-oxobutanoate + L-glutamate. It functions in the pathway amino-acid biosynthesis; L-isoleucine biosynthesis; L-isoleucine from 2-oxobutanoate: step 4/4. Its pathway is amino-acid biosynthesis; L-leucine biosynthesis; L-leucine from 3-methyl-2-oxobutanoate: step 4/4. The protein operates within amino-acid biosynthesis; L-valine biosynthesis; L-valine from pyruvate: step 4/4. Acts on leucine, isoleucine and valine. This Methanocaldococcus jannaschii (strain ATCC 43067 / DSM 2661 / JAL-1 / JCM 10045 / NBRC 100440) (Methanococcus jannaschii) protein is Putative branched-chain-amino-acid aminotransferase (ilvE).